The following is a 447-amino-acid chain: Argininosuccinate synthase (447 aa).

ATP contacts are provided by residues 17–25 (AFSGGLDTS) and Ala-43. Tyr-99 contacts L-citrulline. ATP contacts are provided by Gly-129 and Thr-131. Thr-131, Asn-135, and Asp-136 together coordinate L-aspartate. Position 135 (Asn-135) interacts with L-citrulline. Asp-136 contacts ATP. L-citrulline is bound by residues Arg-139 and Ser-192. Asp-194 contributes to the ATP binding site. L-citrulline-binding residues include Thr-201, Glu-203, and Glu-280.

It belongs to the argininosuccinate synthase family. Type 2 subfamily. As to quaternary structure, homotetramer.

It localises to the cytoplasm. The enzyme catalyses L-citrulline + L-aspartate + ATP = 2-(N(omega)-L-arginino)succinate + AMP + diphosphate + H(+). It functions in the pathway amino-acid biosynthesis; L-arginine biosynthesis; L-arginine from L-ornithine and carbamoyl phosphate: step 2/3. The polypeptide is Argininosuccinate synthase (Shigella flexneri serotype 5b (strain 8401)).